We begin with the raw amino-acid sequence, 217 residues long: GRB2-related adapter protein (217 aa).

One can recognise an SH3 1 domain in the interval 1 to 58 (MESVALYSFQATESDELAFNKGDTLKILNMEDDQNWYKAELRGAEGFVPKNYIRVKPH). In terms of domain architecture, SH2 spans 60-152 (WYSGRISRQL…RRQIFLCDEQ (93 aa)). Residues 158–217 (SRACFAQAQFDFSAQDPSQLSLRRGDIVEVVEREDPHWWRGRAGGRLGFFPRSYVQPVHL) form the SH3 2 domain.

This sequence belongs to the GRB2/sem-5/DRK family. Associates through its SH2 domain with ligand-activated receptors for stem cell factor (KIT) and erythropoietin (EPOR). Also forms a stable complex with the Bcr-Abl oncoprotein. GRAP is associated with the Ras guanine nucleotide exchange factor SOS1, primarily through its N-terminal SH3 domain. Interacts with phosphorylated LAT upon TCR activation. Interacts with SHB. In terms of tissue distribution, expressed in inner ear, in neruonal fibers innervating cochlear and utricular auditory hair cells (at protein level).

The protein resides in the membrane. It is found in the synapse. In terms of biological role, couples signals from receptor and cytoplasmic tyrosine kinases to the Ras signaling pathway. Plays a role in the inner ear and in hearing. The protein is GRB2-related adapter protein of Mus musculus (Mouse).